The sequence spans 359 residues: Ferredoxin--NADP reductase (359 aa).

Residues Asp48, Gln56, Tyr61, Ala101, Phe139, Asp304, and Ser345 each contribute to the FAD site.

Belongs to the ferredoxin--NADP reductase type 2 family. Homodimer. The cofactor is FAD.

The enzyme catalyses 2 reduced [2Fe-2S]-[ferredoxin] + NADP(+) + H(+) = 2 oxidized [2Fe-2S]-[ferredoxin] + NADPH. The polypeptide is Ferredoxin--NADP reductase (Ralstonia pickettii (strain 12J)).